We begin with the raw amino-acid sequence, 273 residues long: MDWLLLAKAAIMGIVEGLTEFFPISSTGHLIVVGDLINFDDRIGNVFEVVIQLGAILAVCWEYRARLWQVAIDLPTSTMARKFVLNLLIAFLPAAIVGVLLIKTIKSYLFNPVAVACALVVGGLVILWAERRECTARVHRIDDMSHLDALKVGLAQIASLIPGTSRSGSTIIGGMLFGLDRRVATEFSFFLAIPIMFAATAYDVLKHWELFTAADLPTFGTGFLFAFLSAFVAVRGLIRFVASHTFNVFAWYRIVFGLIILGSWWLGWINWAS.

6 consecutive transmembrane segments (helical) span residues 43–63 (IGNVFEVVIQLGAILAVCWEY), 82–102 (KFVLNLLIAFLPAAIVGVLLI), 109–129 (LFNPVAVACALVVGGLVILWA), 185–205 (TEFSFFLAIPIMFAATAYDVL), 214–234 (ADLPTFGTGFLFAFLSAFVAV), and 249–269 (FAWYRIVFGLIILGSWWLGWI).

This sequence belongs to the UppP family.

Its subcellular location is the cell inner membrane. The enzyme catalyses di-trans,octa-cis-undecaprenyl diphosphate + H2O = di-trans,octa-cis-undecaprenyl phosphate + phosphate + H(+). Functionally, catalyzes the dephosphorylation of undecaprenyl diphosphate (UPP). Confers resistance to bacitracin. In Laribacter hongkongensis (strain HLHK9), this protein is Undecaprenyl-diphosphatase.